We begin with the raw amino-acid sequence, 301 residues long: uncharacterized protein (301 aa).

Active-site charge relay system residues include serine 44 and tyrosine 107. Tyrosine 133 acts as the Proton donor in catalysis. Residue lysine 162 is the Schiff-base intermediate with substrate of the active site.

The protein belongs to the DapA family. Homotetramer.

The protein localises to the cytoplasm. This is an uncharacterized protein from Pyrobaculum aerophilum (strain ATCC 51768 / DSM 7523 / JCM 9630 / CIP 104966 / NBRC 100827 / IM2).